The primary structure comprises 231 residues: Probable pseudouridine-5'-phosphatase (231 aa).

D15 (nucleophile) is an active-site residue. Positions 15 and 17 each coordinate Mg(2+). D17 serves as the catalytic Proton donor.

It belongs to the HAD-like hydrolase superfamily. CbbY/CbbZ/Gph/YieH family. Mg(2+) serves as cofactor.

The enzyme catalyses psi-UMP + H2O = pseudouridine + phosphate. Functionally, dephosphorylates pseudouridine 5'-phosphate, a potential intermediate in rRNA degradation. The sequence is that of Probable pseudouridine-5'-phosphatase (Gs1l) from Drosophila melanogaster (Fruit fly).